A 633-amino-acid chain; its full sequence is DNA topoisomerase 1 (633 aa).

In terms of domain architecture, Toprim spans 6–115; the sequence is KKYIVVESPA…KNRIVFSEIT (110 aa). 2 residues coordinate Mg(2+): E12 and D84. The region spanning 130–543 is the Topo IA-type catalytic domain; sequence DMKKVRAQLA…EFYESFSSVF (414 aa). An interaction with DNA region spans residues 164-169; sequence SAGRVQ. The active-site O-(5'-phospho-DNA)-tyrosine intermediate is Y288. Disulfide bonds link C559-C578 and C561-C580. The segment at 559 to 580 adopts a C4-type zinc-finger fold; the sequence is CSCGKEMRLSFGKYGFYLKCEC. The tract at residues 601–633 is disordered; it reads LGRKDSESGSPDGRSVEGKGNLSEKRRKGKKGS.

This sequence belongs to the type IA topoisomerase family. As to quaternary structure, monomer. Mg(2+) serves as cofactor.

It carries out the reaction ATP-independent breakage of single-stranded DNA, followed by passage and rejoining.. Functionally, releases the supercoiling and torsional tension of DNA, which is introduced during the DNA replication and transcription, by transiently cleaving and rejoining one strand of the DNA duplex. Introduces a single-strand break via transesterification at a target site in duplex DNA. The scissile phosphodiester is attacked by the catalytic tyrosine of the enzyme, resulting in the formation of a DNA-(5'-phosphotyrosyl)-enzyme intermediate and the expulsion of a 3'-OH DNA strand. The free DNA strand then undergoes passage around the unbroken strand, thus removing DNA supercoils. Finally, in the religation step, the DNA 3'-OH attacks the covalent intermediate to expel the active-site tyrosine and restore the DNA phosphodiester backbone. This chain is DNA topoisomerase 1, found in Thermotoga maritima (strain ATCC 43589 / DSM 3109 / JCM 10099 / NBRC 100826 / MSB8).